Consider the following 165-residue polypeptide: UPF0114 protein ESA_00283 (165 aa).

A run of 3 helical transmembrane segments spans residues Leu15–Phe35, Leu53–Val73, and Leu136–Leu156.

Belongs to the UPF0114 family.

The protein resides in the cell membrane. The sequence is that of UPF0114 protein ESA_00283 from Cronobacter sakazakii (strain ATCC BAA-894) (Enterobacter sakazakii).